Here is a 207-residue protein sequence, read N- to C-terminus: HTH-type transcriptional regulator AqdR (207 aa).

One can recognise an HTH tetR-type domain in the interval 16-76 (ARFRERVLDA…DALLTRTQAE (61 aa)). The segment at residues 39–58 (GFADVARKAGVNGVSLYRRW) is a DNA-binding region (H-T-H motif).

Its function is as follows. May regulate the expression of genes involved in the degradation of the Pseudomonas aeruginosa quorum sensing signal molecules HHQ (2-heptyl-4-quinolone) and PQS (2-heptyl-3-hydroxy-4-quinolone). The polypeptide is HTH-type transcriptional regulator AqdR (Rhodococcus erythropolis (Arthrobacter picolinophilus)).